We begin with the raw amino-acid sequence, 428 residues long: MCLIDSVHARQILDSRGTPTVEVEVTLEDGSMGRSAVPSGASTGAFEAHELRDQDNNEYLGKGVTRAVRSVNSEIAPVLIGFDAFDQVGLDHRMIELDGTNNKSRLGANAILGVSLASASAAARAADLSLFRYLGGPSSRILPVPMMNIINGGAHADTGVDIQEFMILPVGARSFSESLRWGCEVYHSLKVQLRESGLSSGLGDEGGFAPALRSNRTALDLILSAIEKAGFSPGIDIVLALDIAASEFCKAPGHYRFEGKDITSDELISYYEGLLSSYPLVSIEDPLDQDDWEGYRTLTTHIGDRVQIVGDDLFVTNTSRLSRGIQSGVANSILVKVNQIGTLTETFDAVDMAAKGGYTAVLSHRSGETEDTTIADMAVATNCGQIKTGAPARGERIAKYNQLLRIEEKLGRSARYAGWLSYPRWQGK.

Q163 lines the (2R)-2-phosphoglycerate pocket. Catalysis depends on E205, which acts as the Proton donor. Residues D242, E284, and D311 each coordinate Mg(2+). Residues K336, R365, S366, and K387 each coordinate (2R)-2-phosphoglycerate. K336 serves as the catalytic Proton acceptor.

It belongs to the enolase family. It depends on Mg(2+) as a cofactor.

It is found in the cytoplasm. The protein resides in the secreted. Its subcellular location is the cell surface. It catalyses the reaction (2R)-2-phosphoglycerate = phosphoenolpyruvate + H2O. Its pathway is carbohydrate degradation; glycolysis; pyruvate from D-glyceraldehyde 3-phosphate: step 4/5. Functionally, catalyzes the reversible conversion of 2-phosphoglycerate (2-PG) into phosphoenolpyruvate (PEP). It is essential for the degradation of carbohydrates via glycolysis. In Tropheryma whipplei (strain TW08/27) (Whipple's bacillus), this protein is Enolase.